A 920-amino-acid chain; its full sequence is 2-oxoadipate dehydrogenase complex component E1 (920 aa).

An N6-succinyllysine mark is found at K183 and K188. The segment at 299-318 (GKTRGRQQSQEDGDYSPNGS) is disordered. N6-succinyllysine is present on residues K800 and K818.

This sequence belongs to the alpha-ketoglutarate dehydrogenase family. In terms of assembly, the 2-oxoadipate dehydrogenase complex is composed of OADH (2-oxoadipate dehydrogenase; E1a), DLST (dihydrolipoamide succinyltransferase; E2) and DLD (dihydrolipoamide dehydrogenase; E3). E1a functional unit is a dimer. Thiamine diphosphate is required as a cofactor.

It localises to the mitochondrion. It catalyses the reaction N(6)-[(R)-lipoyl]-L-lysyl-[protein] + 2-oxoadipate + H(+) = N(6)-[(R)-S(8)-glutaryldihydrolipoyl]-L-lysyl-[protein] + CO2. Its pathway is amino-acid degradation. 2-oxoadipate dehydrogenase (E1a) component of the 2-oxoadipate dehydrogenase complex (OADHC). Participates in the first step, rate limiting for the overall conversion of 2-oxoadipate (alpha-ketoadipate) to glutaryl-CoA and CO(2) catalyzed by the whole OADHC. Catalyzes the irreversible decarboxylation of 2-oxoadipate via the thiamine diphosphate (ThDP) cofactor and subsequent transfer of the decarboxylated acyl intermediate on an oxidized dihydrolipoyl group that is covalently amidated to the E2 enzyme (dihydrolipoyllysine-residue succinyltransferase or DLST). Can catalyze the decarboxylation of 2-oxoglutarate in vitro, but at a much lower rate than 2-oxoadipate. Responsible for the last step of L-lysine, L-hydroxylysine and L-tryptophan catabolism with the common product being 2-oxoadipate. The protein is 2-oxoadipate dehydrogenase complex component E1 (Dhtkd1) of Rattus norvegicus (Rat).